The chain runs to 214 residues: Probable transaldolase (214 aa).

K83 serves as the catalytic Schiff-base intermediate with substrate.

It belongs to the transaldolase family. Type 3B subfamily.

The protein resides in the cytoplasm. It catalyses the reaction D-sedoheptulose 7-phosphate + D-glyceraldehyde 3-phosphate = D-erythrose 4-phosphate + beta-D-fructose 6-phosphate. It functions in the pathway carbohydrate degradation; pentose phosphate pathway; D-glyceraldehyde 3-phosphate and beta-D-fructose 6-phosphate from D-ribose 5-phosphate and D-xylulose 5-phosphate (non-oxidative stage): step 2/3. Functionally, transaldolase is important for the balance of metabolites in the pentose-phosphate pathway. The sequence is that of Probable transaldolase from Streptococcus equi subsp. zooepidemicus (strain H70).